Consider the following 242-residue polypeptide: Cytochrome c oxidase subunit 2 (242 aa).

Residues 1–30 (MSFYGSRYFGDIVHGELGKDLFRYHGFVMM) are Mitochondrial intermembrane-facing. A helical transmembrane segment spans residues 31 to 47 (VAVAVLVFVMYMGCVIL). The Mitochondrial matrix segment spans residues 48 to 66 (FTKFSYRHFLNRQRLEFWW). Residues 67–83 (TIVPMLMLVGLWXPSMI) form a helical membrane-spanning segment. Residues 84–242 (NLYYMEEVKR…YFVMWLEALN (159 aa)) lie on the Mitochondrial intermembrane side of the membrane. 6 residues coordinate Cu cation: H176, C211, E213, C215, H219, and M222. Residue E213 coordinates Mg(2+).

The protein belongs to the cytochrome c oxidase subunit 2 family. As to quaternary structure, component of the cytochrome c oxidase (complex IV, CIV), a multisubunit enzyme composed of a catalytic core of 3 subunits and several supernumerary subunits. The complex exists as a monomer or a dimer and forms supercomplexes (SCs) in the inner mitochondrial membrane with ubiquinol-cytochrome c oxidoreductase (cytochrome b-c1 complex, complex III, CIII). It depends on Cu cation as a cofactor.

It is found in the mitochondrion inner membrane. The catalysed reaction is 4 Fe(II)-[cytochrome c] + O2 + 8 H(+)(in) = 4 Fe(III)-[cytochrome c] + 2 H2O + 4 H(+)(out). In terms of biological role, component of the cytochrome c oxidase, the last enzyme in the mitochondrial electron transport chain which drives oxidative phosphorylation. The respiratory chain contains 3 multisubunit complexes succinate dehydrogenase (complex II, CII), ubiquinol-cytochrome c oxidoreductase (cytochrome b-c1 complex, complex III, CIII) and cytochrome c oxidase (complex IV, CIV), that cooperate to transfer electrons derived from NADH and succinate to molecular oxygen, creating an electrochemical gradient over the inner membrane that drives transmembrane transport and the ATP synthase. Cytochrome c oxidase is the component of the respiratory chain that catalyzes the reduction of oxygen to water. Electrons originating from reduced cytochrome c in the intermembrane space (IMS) are transferred via the dinuclear copper A center (CU(A)) of subunit 2 and heme A of subunit 1 to the active site in subunit 1, a binuclear center (BNC) formed by heme A3 and copper B (CU(B)). The BNC reduces molecular oxygen to 2 water molecules using 4 electrons from cytochrome c in the IMS and 4 protons from the mitochondrial matrix. The chain is Cytochrome c oxidase subunit 2 (COII) from Mytilus edulis (Blue mussel).